The primary structure comprises 376 residues: Queuine tRNA-ribosyltransferase (376 aa).

The active-site Proton acceptor is the Asp90. Substrate is bound by residues 90 to 94 (DSGGF), Asp144, Gln193, and Gly220. The interval 251-257 (GVGTPED) is RNA binding. Asp270 serves as the catalytic Nucleophile. The tract at residues 275-279 (TRNAR) is RNA binding; important for wobble base 34 recognition. The Zn(2+) site is built by Cys308, Cys310, Cys313, and His339.

The protein belongs to the queuine tRNA-ribosyltransferase family. As to quaternary structure, homodimer. Within each dimer, one monomer is responsible for RNA recognition and catalysis, while the other monomer binds to the replacement base PreQ1. Zn(2+) serves as cofactor.

It catalyses the reaction 7-aminomethyl-7-carbaguanine + guanosine(34) in tRNA = 7-aminomethyl-7-carbaguanosine(34) in tRNA + guanine. It functions in the pathway tRNA modification; tRNA-queuosine biosynthesis. Catalyzes the base-exchange of a guanine (G) residue with the queuine precursor 7-aminomethyl-7-deazaguanine (PreQ1) at position 34 (anticodon wobble position) in tRNAs with GU(N) anticodons (tRNA-Asp, -Asn, -His and -Tyr). Catalysis occurs through a double-displacement mechanism. The nucleophile active site attacks the C1' of nucleotide 34 to detach the guanine base from the RNA, forming a covalent enzyme-RNA intermediate. The proton acceptor active site deprotonates the incoming PreQ1, allowing a nucleophilic attack on the C1' of the ribose to form the product. After dissociation, two additional enzymatic reactions on the tRNA convert PreQ1 to queuine (Q), resulting in the hypermodified nucleoside queuosine (7-(((4,5-cis-dihydroxy-2-cyclopenten-1-yl)amino)methyl)-7-deazaguanosine). The protein is Queuine tRNA-ribosyltransferase of Cupriavidus pinatubonensis (strain JMP 134 / LMG 1197) (Cupriavidus necator (strain JMP 134)).